Here is a 199-residue protein sequence, read N- to C-terminus: Segregation and condensation protein B (199 aa).

This sequence belongs to the ScpB family. As to quaternary structure, homodimer. Homodimerization may be required to stabilize the binding of ScpA to the Smc head domains. Component of a cohesin-like complex composed of ScpA, ScpB and the Smc homodimer, in which ScpA and ScpB bind to the head domain of Smc. The presence of the three proteins is required for the association of the complex with DNA.

The protein resides in the cytoplasm. Its function is as follows. Participates in chromosomal partition during cell division. May act via the formation of a condensin-like complex containing Smc and ScpA that pull DNA away from mid-cell into both cell halves. In Leuconostoc mesenteroides subsp. mesenteroides (strain ATCC 8293 / DSM 20343 / BCRC 11652 / CCM 1803 / JCM 6124 / NCDO 523 / NBRC 100496 / NCIMB 8023 / NCTC 12954 / NRRL B-1118 / 37Y), this protein is Segregation and condensation protein B.